The following is a 219-amino-acid chain: Claudin-6 (219 aa).

Over 1-7 (MASTGLQ) the chain is Cytoplasmic. A helical membrane pass occupies residues 8–28 (ILGIVLTLLGWVNALVSCALP). Residues 29–81 (MWKVTAFIGNSIVVAQMVWEGLWMSCVVQSTGQMQCKVYDSLLALPQDLQAAR) are Extracellular-facing. Residues 82-102 (ALCVVTLLIVLLGLLVYLAGA) form a helical membrane-spanning segment. Residues 103 to 116 (KCTTCVEDRNSKSR) lie on the Cytoplasmic side of the membrane. Residues 117 to 137 (LVLISGIIFVISGVLTLIPVC) traverse the membrane as a helical segment. Residues 138–163 (WTAHSIIQDFYNPLVADAQKRELGAS) lie on the Extracellular side of the membrane. Residues 164–184 (LYLGWAASGLLLLGGGLLCCA) traverse the membrane as a helical segment. Residues 185-219 (CSSGGTQGPRHYMACYSTSVPHSRGPSEYPTKNYV) are Cytoplasmic-facing. Phosphoserine is present on residues Ser201, Ser203, Ser207, and Ser211. Positions 218-219 (YV) are interactions with TJP1, TJP2 and TJP3.

It belongs to the claudin family. As to quaternary structure, directly interacts with TJP1/ZO-1, TJP2/ZO-2 and TJP3/ZO-3. Interacts with CLDN1, CD81 and OCLN. Expressed mostly in embryonic tissues.

It is found in the cell junction. It localises to the tight junction. The protein localises to the cell membrane. In terms of biological role, plays a major role in tight junction-specific obliteration of the intercellular space, through calcium-independent cell-adhesion activity. This Mus musculus (Mouse) protein is Claudin-6 (Cldn6).